An 86-amino-acid chain; its full sequence is Weak toxin 2 (86 aa).

An N-terminal signal peptide occupies residues 1-23 (MKTLLLTLVVVAIVCLDLGYTLT). 5 disulfide bridges follow: cysteine 24–cysteine 45, cysteine 27–cysteine 32, cysteine 38–cysteine 63, cysteine 67–cysteine 78, and cysteine 79–cysteine 84.

The protein belongs to the three-finger toxin family. Ancestral subfamily. Orphan group II sub-subfamily. Expressed by the venom gland.

The protein resides in the secreted. In terms of biological role, binds with low affinity to muscular (alpha-1-beta-1-delta-epsilon/CHRNA1-CHRNB1-CHRND-CHRNE) and very low affinity to neuronal (alpha-7/CHRNA7) nicotinic acetylcholine receptor (nAChR). This Bungarus candidus (Malayan krait) protein is Weak toxin 2.